A 97-amino-acid polypeptide reads, in one-letter code: Co-chaperonin GroES (97 aa).

It belongs to the GroES chaperonin family. As to quaternary structure, heptamer of 7 subunits arranged in a ring. Interacts with the chaperonin GroEL.

The protein resides in the cytoplasm. Functionally, together with the chaperonin GroEL, plays an essential role in assisting protein folding. The GroEL-GroES system forms a nano-cage that allows encapsulation of the non-native substrate proteins and provides a physical environment optimized to promote and accelerate protein folding. GroES binds to the apical surface of the GroEL ring, thereby capping the opening of the GroEL channel. The protein is Co-chaperonin GroES of Stenotrophomonas maltophilia (Pseudomonas maltophilia).